A 32-amino-acid chain; its full sequence is Acatoxin 1 (32 aa).

3 disulfide bridges follow: C1–C15, C8–C20, and C14–C26.

The protein resides in the secreted. Its subcellular location is the nematocyst. Reversibly inhibits acid-sensing ion channels (ASIC) in rat dorsal root ganglia neurons. Reversibly inhibits voltage-gated potassium channels (Kv) in rat DRG neurons. This Anthopleura cascaia (Sea anemone) protein is Acatoxin 1.